Here is a 101-residue protein sequence, read N- to C-terminus: NAD(P)H-quinone oxidoreductase subunit 4L, chloroplastic (101 aa).

Helical transmembrane passes span 2-22 (MLEH…YGLI), 32-52 (MCLE…SDFF), and 61-81 (IFSI…PAIV).

Belongs to the complex I subunit 4L family. In terms of assembly, NDH is composed of at least 16 different subunits, 5 of which are encoded in the nucleus.

The protein resides in the plastid. The protein localises to the chloroplast thylakoid membrane. It catalyses the reaction a plastoquinone + NADH + (n+1) H(+)(in) = a plastoquinol + NAD(+) + n H(+)(out). The enzyme catalyses a plastoquinone + NADPH + (n+1) H(+)(in) = a plastoquinol + NADP(+) + n H(+)(out). Functionally, NDH shuttles electrons from NAD(P)H:plastoquinone, via FMN and iron-sulfur (Fe-S) centers, to quinones in the photosynthetic chain and possibly in a chloroplast respiratory chain. The immediate electron acceptor for the enzyme in this species is believed to be plastoquinone. Couples the redox reaction to proton translocation, and thus conserves the redox energy in a proton gradient. The sequence is that of NAD(P)H-quinone oxidoreductase subunit 4L, chloroplastic from Fagopyrum esculentum subsp. ancestrale (Wild buckwheat).